A 507-amino-acid chain; its full sequence is ATP synthase subunit alpha, chloroplastic (507 aa).

170-177 is an ATP binding site; that stretch reads GDRQTGKT.

It belongs to the ATPase alpha/beta chains family. F-type ATPases have 2 components, CF(1) - the catalytic core - and CF(0) - the membrane proton channel. CF(1) has five subunits: alpha(3), beta(3), gamma(1), delta(1), epsilon(1). CF(0) has four main subunits: a, b, b' and c.

The protein resides in the plastid. The protein localises to the chloroplast thylakoid membrane. The enzyme catalyses ATP + H2O + 4 H(+)(in) = ADP + phosphate + 5 H(+)(out). Its function is as follows. Produces ATP from ADP in the presence of a proton gradient across the membrane. The alpha chain is a regulatory subunit. The chain is ATP synthase subunit alpha, chloroplastic from Populus alba (White poplar).